The primary structure comprises 573 residues: DNA ligase (573 aa).

Residue Glu-248 coordinates ATP. Catalysis depends on Lys-250, which acts as the N6-AMP-lysine intermediate. The ATP site is built by Arg-255, Arg-270, Glu-299, Phe-340, Arg-432, and Lys-438.

The protein belongs to the ATP-dependent DNA ligase family. Requires Mg(2+) as cofactor.

It catalyses the reaction ATP + (deoxyribonucleotide)n-3'-hydroxyl + 5'-phospho-(deoxyribonucleotide)m = (deoxyribonucleotide)n+m + AMP + diphosphate.. DNA ligase that seals nicks in double-stranded DNA during DNA replication, DNA recombination and DNA repair. The polypeptide is DNA ligase (Methanocaldococcus jannaschii (strain ATCC 43067 / DSM 2661 / JAL-1 / JCM 10045 / NBRC 100440) (Methanococcus jannaschii)).